A 288-amino-acid polypeptide reads, in one-letter code: Bifunctional protein FolD (288 aa).

NADP(+)-binding positions include Gly-166–Ser-168, Ser-191, and Ile-232.

It belongs to the tetrahydrofolate dehydrogenase/cyclohydrolase family. In terms of assembly, homodimer.

The catalysed reaction is (6R)-5,10-methylene-5,6,7,8-tetrahydrofolate + NADP(+) = (6R)-5,10-methenyltetrahydrofolate + NADPH. It carries out the reaction (6R)-5,10-methenyltetrahydrofolate + H2O = (6R)-10-formyltetrahydrofolate + H(+). Its pathway is one-carbon metabolism; tetrahydrofolate interconversion. Functionally, catalyzes the oxidation of 5,10-methylenetetrahydrofolate to 5,10-methenyltetrahydrofolate and then the hydrolysis of 5,10-methenyltetrahydrofolate to 10-formyltetrahydrofolate. The chain is Bifunctional protein FolD from Rickettsia africae (strain ESF-5).